The sequence spans 438 residues: Coenzyme A disulfide reductase (438 aa).

8-33 (GAVAGGATCASQIRRLDKESDIIIFE) contributes to the FAD binding site. Substrate is bound by residues Thr-15, Gln-19, Arg-22, Ser-39, and Asn-42. Cys-43 (nucleophile) is an active-site residue. Catalysis depends on Cys-43, which acts as the Redox-active. Lys-71 lines the substrate pocket. Residue 151 to 166 (VLVIGAGYVSLEVLEN) coordinates NADP(+). 267-277 (TNVPNIYAIGD) contacts FAD. His-299 is a binding site for substrate. Tyr-419 is an FAD binding site. Lys-427 lines the substrate pocket.

The protein belongs to the class-III pyridine nucleotide-disulfide oxidoreductase family. As to quaternary structure, homodimer. Requires FAD as cofactor.

The catalysed reaction is NADP(+) + 2 CoA = CoA-disulfide + NADPH + H(+). Its function is as follows. Catalyzes specifically the NADPH-dependent reduction of coenzyme A disulfide. The polypeptide is Coenzyme A disulfide reductase (Staphylococcus aureus (strain Mu3 / ATCC 700698)).